We begin with the raw amino-acid sequence, 440 residues long: V-type ATP synthase beta chain (440 aa).

It belongs to the ATPase alpha/beta chains family.

In terms of biological role, produces ATP from ADP in the presence of a proton gradient across the membrane. The V-type beta chain is a regulatory subunit. The protein is V-type ATP synthase beta chain of Geotalea uraniireducens (strain Rf4) (Geobacter uraniireducens).